Reading from the N-terminus, the 91-residue chain is ATP synthase subunit c 1 (91 aa).

2 helical membrane-spanning segments follow: residues 4–24 (FTMC…GTAI) and 53–73 (IGLA…LIIL).

This sequence belongs to the ATPase C chain family. In terms of assembly, F-type ATPases have 2 components, F(1) - the catalytic core - and F(0) - the membrane proton channel. F(1) has five subunits: alpha(3), beta(3), gamma(1), delta(1), epsilon(1). F(0) has three main subunits: a(1), b(2) and c(10-14). The alpha and beta chains form an alternating ring which encloses part of the gamma chain. F(1) is attached to F(0) by a central stalk formed by the gamma and epsilon chains, while a peripheral stalk is formed by the delta and b chains.

It is found in the cell inner membrane. Functionally, f(1)F(0) ATP synthase produces ATP from ADP in the presence of a proton or sodium gradient. F-type ATPases consist of two structural domains, F(1) containing the extramembraneous catalytic core and F(0) containing the membrane proton channel, linked together by a central stalk and a peripheral stalk. During catalysis, ATP synthesis in the catalytic domain of F(1) is coupled via a rotary mechanism of the central stalk subunits to proton translocation. Key component of the F(0) channel; it plays a direct role in translocation across the membrane. A homomeric c-ring of between 10-14 subunits forms the central stalk rotor element with the F(1) delta and epsilon subunits. The sequence is that of ATP synthase subunit c 1 from Pelobacter propionicus (strain DSM 2379 / NBRC 103807 / OttBd1).